Here is a 11103-residue protein sequence, read N- to C-terminus: Colossin-A (11103 aa).

Positions 1–35 are cleaved as a signal peptide; sequence MGTIKTKFKNNYLKNSYLFIIYIILFNLVIGIANS. N-linked (GlcNAc...) asparagine glycosylation is found at Asn95, Asn120, Asn137, and Asn198. Residues 273–324 form a Kelch 1 repeat; that stretch reads NLFAVGNYVFFDVNRDGVHETTELFAPNVKVELYDAISSTRLIASTFTDLNG. Residues 298–359 enclose the CNA-B 1 domain; that stretch reads APNVKVELYD…SNGPDNVINA (62 aa). N-linked (GlcNAc...) asparagine glycosylation is found at Asn372, Asn386, and Asn422. Positions 423–469 constitute a CNA-B 2 domain; the sequence is LSGITVQLTTPSHVVLKTAQTDYAGNYVFDDLSEGVYSVHFILPENY. Asn493 carries N-linked (GlcNAc...) asparagine glycosylation. CNA-B domains are found at residues 551 to 599, 676 to 745, 803 to 871, 931 to 999, 1057 to 1095, and 1170 to 1231; these read LPGV…PDGY, VANV…INLT, APFV…FTLN, AEGV…IDLS, LPNI…EGDY, and LSNT…FNSS. Residue Asn678 is glycosylated (N-linked (GlcNAc...) asparagine). 3 N-linked (GlcNAc...) asparagine glycosylation sites follow: Asn1059, Asn1229, and Asn1239. Residues 1277–1314 enclose the CNA-B 9 domain; that stretch reads ISNIPLSLISQKTNQIISSVVTDSNGKYQFEDVPPGDY. N-linked (GlcNAc...) asparagine glycosylation is present at Asn1329. CNA-B domains lie at 1391–1458, 1494–1530, 1602–1651, 1708–1779, 1824–1891, 1927–1963, 2035–2086, and 2141–2177; these read SDVS…FKLT, LPGV…PGDY, LPGV…YKQV, LSDI…VTVK, LPGV…QVAQ, and VEGI…PGDY. An N-linked (GlcNAc...) asparagine glycan is attached at Asn1613. The segment at 1716-1740 is disordered; it reads TDKDGNEISNTKSGPDGKYQFEDVP. N-linked (GlcNAc...) asparagine glycosylation is found at Asn1759 and Asn1772. N-linked (GlcNAc...) asparagine glycosylation is present at Asn2046. Asn2192 and Asn2311 each carry an N-linked (GlcNAc...) asparagine glycan. 8 consecutive CNA-B domains span residues 2254–2321, 2357–2402, 2465–2514, 2571–2640, 2687–2754, 2790–2835, 2898–2947, and 3004–3040; these read SDVS…FKLT, LPGV…TPIG, LPGV…YKQV, LSDI…NFVT, and LEGI…PGDY. A glycan (N-linked (GlcNAc...) asparagine) is linked at Asn2476. Residues 2580 to 2603 form a disordered region; the sequence is DKDGNEITNTKSGPDGKYQFEDVP. A glycan (N-linked (GlcNAc...) asparagine) is linked at Asn2622. 2 N-linked (GlcNAc...) asparagine glycosylation sites follow: Asn2801 and Asn2909. Residues Asn3048, Asn3055, and Asn3118 are each glycosylated (N-linked (GlcNAc...) asparagine). CNA-B domains are found at residues 3117-3184, 3220-3256, 3328-3364, and 3434-3470; these read SNVS…FKLT, LPGV…PGDY, LPGV…PGSY, and VEGI…PGDY. N-linked (GlcNAc...) asparagine glycosylation is present at Asn3339. Asn3485 carries N-linked (GlcNAc...) asparagine glycosylation. A Kelch 2 repeat occupies 3503 to 3549; that stretch reads SCFAVSGPLDNQNLGLSLFYEIGTMVWIDSNNNGKFEQPSDVLKSDV. 3 CNA-B domains span residues 3547–3614, 3650–3686, and 3758–3809; these read SDVS…FKLT, LPGV…PGDY, and LPGV…QVAQ. N-linked (GlcNAc...) asparagine glycosylation is found at Asn3769 and Asn3827. The region spanning 3864–3900 is the CNA-B 33 domain; it reads LSDITIRLTDKDGKVIQSTTSGPDGKYQFEDVPPGDY. Asn3915 is a glycosylation site (N-linked (GlcNAc...) asparagine). 8 consecutive CNA-B domains span residues 3980–4047, 4083–4128, 4191–4240, 4297–4378, 4425–4492, 4528–4573, 4636–4685, and 4742–4778; these read SDVS…FKLT, LPGV…TPIG, LPGV…YKQV, LSDI…NFVT, and VEGI…PGDY. N-linked (GlcNAc...) asparagine glycosylation occurs at Asn4202. The disordered stretch occupies residues 4286–4341; the sequence is NTGKQTDDSPPLSDITIRLTDKDGNEITKTKSRPDGNENSNTKSGPDGKYQFEDVP. Residues 4304–4321 are compositionally biased toward basic and acidic residues; sequence LTDKDGNEITKTKSRPDG. Asn4360 carries an N-linked (GlcNAc...) asparagine glycan. The N-linked (GlcNAc...) asparagine glycan is linked to Asn4647. 2 N-linked (GlcNAc...) asparagine glycosylation sites follow: Asn4792 and Asn4918. 4 consecutive CNA-B domains span residues 4865–4928, 4964–5009, 5072–5123, and 5178–5214; these read ITLT…FKLT, LPGV…TPIG, LPGV…QVAQ, and LEGI…PGDY. Asn5083 is a glycosylation site (N-linked (GlcNAc...) asparagine). Residues Asn5229, Asn5292, and Asn5348 are each glycosylated (N-linked (GlcNAc...) asparagine). Residues 5247 to 5293 form a Kelch 3 repeat; the sequence is SCFAVSGPLDNQNLGLSPFYEIGTIVWIDSNNNDKFEQPSDIGKSNV. CNA-B domains follow at residues 5291 to 5358, 5394 to 5430, 5502 to 5553, and 5608 to 5644; these read SNVS…FKLT, LPGV…PGDY, LPGV…QVAQ, and LSDI…PGDY. A glycan (N-linked (GlcNAc...) asparagine) is linked at Asn5513. A glycan (N-linked (GlcNAc...) asparagine) is linked at Asn5659. 4 CNA-B domains span residues 5724 to 5791, 5827 to 5872, 5935 to 5984, and 6041 to 6077; these read SDVS…FKLT, LPGV…TPIG, LPGV…YKQV, and VEGI…PGDY. Asn5946 carries N-linked (GlcNAc...) asparagine glycosylation. N-linked (GlcNAc...) asparagine glycans are attached at residues Asn6092 and Asn6155. 4 CNA-B domains span residues 6154–6221, 6257–6302, 6365–6416, and 6471–6507; these read SNVS…FKLT, LPGV…TPIG, LPGV…QDAQ, and LSDI…PGDY. N-linked (GlcNAc...) asparagine glycosylation occurs at Asn6376. N-linked (GlcNAc...) asparagine glycosylation is found at Asn6522 and Asn6535. 4 consecutive CNA-B domains span residues 6587-6654, 6690-6726, 6798-6849, and 6904-6940; these read SDVS…FKLT, LEGV…PGDY, LPGV…QVNQ, and VEGI…PGDY. 3 N-linked (GlcNAc...) asparagine glycosylation sites follow: Asn6701, Asn6809, and Asn6848. Asn6954, Asn7080, Asn7137, and Asn7245 each carry an N-linked (GlcNAc...) asparagine glycan. CNA-B domains are found at residues 7023–7090, 7126–7171, 7234–7285, 7340–7411, 7456–7523, 7559–7596, 7668–7719, and 7774–7810; these read SDVS…FKLT, LAGV…TPIG, LPGV…QDAQ, LSDI…VTVK, LPGV…PGDY, LTGV…QVAQ, and VEGI…PGDY. The tract at residues 7351–7372 is disordered; it reads DGNEITNTKSGPDGKYQFEDVP. Residues Asn7391 and Asn7404 are each glycosylated (N-linked (GlcNAc...) asparagine). The N-linked (GlcNAc...) asparagine glycan is linked to Asn7679. N-linked (GlcNAc...) asparagine glycosylation is found at Asn7825 and Asn7837. 7 consecutive CNA-B domains span residues 7887–7954, 7990–8035, 8098–8149, 8204–8265, 8313–8374, 8420–8456, and 8528–8587; these read SDVS…FKLT, LPGV…TPIG, LPGV…QVAQ, IPNI…FSLS, VGKS…VVDQ, LPGV…QGDY, and LPGI…PFDS. Residues Asn8109 and Asn8255 are each glycosylated (N-linked (GlcNAc...) asparagine). N-linked (GlcNAc...) asparagine glycosylation is found at Asn8441, Asn8539, Asn8629, Asn8636, Asn8655, Asn8693, Asn8753, Asn8811, Asn8896, Asn8930, Asn8976, Asn9023, Asn9073, Asn9087, Asn9123, Asn9137, Asn9146, Asn9149, Asn9186, Asn9297, Asn9305, Asn9349, Asn9409, Asn9419, Asn9533, Asn9543, Asn9556, Asn9601, Asn9709, Asn9718, Asn9786, Asn9839, Asn9850, Asn9867, Asn9891, Asn9941, Asn9957, Asn9989, Asn10042, Asn10096, Asn10111, Asn10174, Asn10267, Asn10315, Asn10348, Asn10360, Asn10379, Asn10394, Asn10431, Asn10477, Asn10552, Asn10581, Asn10715, Asn10786, Asn10802, Asn10943, and Asn11018. The stretch at 8592-8638 is one Kelch 4 repeat; that stretch reads CFDLLDKSITNANLGLIPLYNIGSDAWLDNLNNGVRRNDSLLVPNVT. Positions 8634 to 8680 constitute a CNA-B 77 domain; sequence VPNVTMSLYDNNGNLIETTITNSSGKYQFNDIQPGSYCVRATVPSNY. One can recognise a CNA-B 78 domain in the interval 8751-8810; that stretch reads LPNVTVQLYDKVSGNILAATRSDDKGGYVVPNLLPSADYCVQFEVPPGYIVVVDSDDSVT. The region spanning 8965 to 9014 is the CNA-B 79 domain; it reads LPGVSVSLFSPNGTSIANTITDENGKYAFKDQVPGSYCIKMIIPPHYQQV. The region spanning 9071 to 9107 is the CNA-B 80 domain; sequence VPNITMTLLDSQGKQINSTITNANGFYQFVDVAPGNY. Residues 9185–9220 enclose the CNA-B 81 domain; that stretch reads ANVSLSLVNTGNSEIKTTTTNSQGKYSFGQLLAGNY. Residues 9299 to 9332 form the CNA-B 82 domain; that stretch reads TITLTPNNTALPTQTTTTDVNGNYRFDNLVVGNY. CNA-B domains are found at residues 9407 to 9447 and 9531 to 9569; these read LVNI…VVQF and MANI…PGNY. Residues 9659-9728 form the CNA-B 85 domain; the sequence is VEGITVRIYD…ATGYISIDLS (70 aa). The 60-residue stretch at 10044 to 10103 folds into the CNA-B 86 domain; it reads TLFNADGSTPNDIFGKPIQMAVTDVNGKYSIPNVPPGSYYMTVSIPPRYIISNFTTTGLV. The CNA-B 87 domain maps to 10172-10236; the sequence is LPNVTVLLLN…ITPTKLVSTS (65 aa). Residues 10313–10370 enclose the CNA-B 88 domain; the sequence is PGNFTVQLKSANQAVNGGLTTVPIGTVVATSPVAANGSFSIPNLQLGNYTLTLIPPSG.

Belongs to the serine-aspartate repeat-containing protein (SDr) family.

It is found in the secreted. The protein is Colossin-A (colA) of Dictyostelium discoideum (Social amoeba).